Here is a 384-residue protein sequence, read N- to C-terminus: Queuine tRNA-ribosyltransferase (384 aa).

The active-site Proton acceptor is aspartate 103. Substrate-binding positions include 103-107 (DSGGF), aspartate 157, glutamine 200, and glycine 227. The RNA binding stretch occupies residues 258–264 (GVGTYRE). Aspartate 277 (nucleophile) is an active-site residue. The interval 282–286 (TRLAR) is RNA binding; important for wobble base 34 recognition. Cysteine 315, cysteine 317, cysteine 320, and histidine 346 together coordinate Zn(2+).

The protein belongs to the queuine tRNA-ribosyltransferase family. In terms of assembly, homodimer. Within each dimer, one monomer is responsible for RNA recognition and catalysis, while the other monomer binds to the replacement base PreQ1. Zn(2+) serves as cofactor.

The enzyme catalyses 7-aminomethyl-7-carbaguanine + guanosine(34) in tRNA = 7-aminomethyl-7-carbaguanosine(34) in tRNA + guanine. It functions in the pathway tRNA modification; tRNA-queuosine biosynthesis. Catalyzes the base-exchange of a guanine (G) residue with the queuine precursor 7-aminomethyl-7-deazaguanine (PreQ1) at position 34 (anticodon wobble position) in tRNAs with GU(N) anticodons (tRNA-Asp, -Asn, -His and -Tyr). Catalysis occurs through a double-displacement mechanism. The nucleophile active site attacks the C1' of nucleotide 34 to detach the guanine base from the RNA, forming a covalent enzyme-RNA intermediate. The proton acceptor active site deprotonates the incoming PreQ1, allowing a nucleophilic attack on the C1' of the ribose to form the product. After dissociation, two additional enzymatic reactions on the tRNA convert PreQ1 to queuine (Q), resulting in the hypermodified nucleoside queuosine (7-(((4,5-cis-dihydroxy-2-cyclopenten-1-yl)amino)methyl)-7-deazaguanosine). This Synechococcus elongatus (strain ATCC 33912 / PCC 7942 / FACHB-805) (Anacystis nidulans R2) protein is Queuine tRNA-ribosyltransferase.